Consider the following 358-residue polypeptide: Isopentenyl-diphosphate delta-isomerase (358 aa).

Position 12-13 (12-13) interacts with substrate; the sequence is RK. Residues 69–71, Ser99, and Asn128 each bind FMN; that span reads AMT. Gln158 is a binding site for substrate. Glu159 is a Mg(2+) binding site. FMN contacts are provided by residues Lys190, Thr220, 267–269, and 288–289; these read GIR and AG.

Belongs to the IPP isomerase type 2 family. In terms of assembly, homooctamer. Dimer of tetramers. FMN serves as cofactor. NADPH is required as a cofactor. Requires Mg(2+) as cofactor.

Its subcellular location is the cytoplasm. The enzyme catalyses isopentenyl diphosphate = dimethylallyl diphosphate. Functionally, involved in the biosynthesis of isoprenoids. Catalyzes the 1,3-allylic rearrangement of the homoallylic substrate isopentenyl (IPP) to its allylic isomer, dimethylallyl diphosphate (DMAPP). The polypeptide is Isopentenyl-diphosphate delta-isomerase (Listeria welshimeri serovar 6b (strain ATCC 35897 / DSM 20650 / CCUG 15529 / CIP 8149 / NCTC 11857 / SLCC 5334 / V8)).